Consider the following 352-residue polypeptide: Pollen-specific protein SF21 (352 aa).

The protein belongs to the NDRG family. As to expression, pollen.

The chain is Pollen-specific protein SF21 (SF21) from Helianthus annuus (Common sunflower).